Consider the following 453-residue polypeptide: Ribulose bisphosphate carboxylase large chain (453 aa).

A propeptide spanning residues 1–2 (MS) is cleaved from the precursor. At proline 3 the chain carries N-acetylproline. At lysine 14 the chain carries N6,N6,N6-trimethyllysine. Substrate contacts are provided by asparagine 123 and threonine 173. Lysine 175 serves as the catalytic Proton acceptor. Position 177 (lysine 177) interacts with substrate. Mg(2+) contacts are provided by lysine 201, aspartate 203, and glutamate 204. An N6-carboxylysine modification is found at lysine 201. Histidine 294 (proton acceptor) is an active-site residue. Residues arginine 295, histidine 327, and serine 379 each coordinate substrate.

The protein belongs to the RuBisCO large chain family. Type I subfamily. In terms of assembly, heterohexadecamer of 8 large chains and 8 small chains; disulfide-linked. The disulfide link is formed within the large subunit homodimers. Mg(2+) serves as cofactor. The disulfide bond which can form in the large chain dimeric partners within the hexadecamer appears to be associated with oxidative stress and protein turnover.

It localises to the plastid. The protein localises to the chloroplast. The catalysed reaction is 2 (2R)-3-phosphoglycerate + 2 H(+) = D-ribulose 1,5-bisphosphate + CO2 + H2O. The enzyme catalyses D-ribulose 1,5-bisphosphate + O2 = 2-phosphoglycolate + (2R)-3-phosphoglycerate + 2 H(+). In terms of biological role, ruBisCO catalyzes two reactions: the carboxylation of D-ribulose 1,5-bisphosphate, the primary event in carbon dioxide fixation, as well as the oxidative fragmentation of the pentose substrate in the photorespiration process. Both reactions occur simultaneously and in competition at the same active site. This chain is Ribulose bisphosphate carboxylase large chain, found in Galium album (White bedstraw).